We begin with the raw amino-acid sequence, 371 residues long: Integrator complex assembly factor WDR73 (371 aa).

WD repeat units follow at residues 81–121 (FSDR…DVIE), 273–313 (SPDP…GKKT), and 333–371 (DSAP…LQAS).

This sequence belongs to the WD repeat WDR73 family. In terms of assembly, interacts with INTS9 and INTS11; the interaction is direct. Part of the multiprotein complex composed of BRAT1, WDR73, as well as integrator complex subunits INTS9 and INTS11.

Its subcellular location is the cytoplasm. The protein localises to the cytoskeleton. It is found in the spindle. It localises to the spindle pole. The protein resides in the cleavage furrow. Component of a multiprotein complex required for the assembly of the RNA endonuclease module of the integrator complex. Associates with INTS9 and INTS11 in the cytoplasm, stabilizing the INTS9-INTS11 heterodimer and blocking the active site of INTS11. BRAT1 then joins the complex and plugs the active site of INTS11, leading to WDR73 release and nuclear import of INTS9 and INTS11. This chain is Integrator complex assembly factor WDR73 (Wdr73), found in Mus musculus (Mouse).